The chain runs to 644 residues: Coiled-coil domain-containing protein 22 homolog (644 aa).

The segment at 316–341 (DEQKAAAMAGLSESGPPKMDTEEELQ) is disordered. Coiled coils occupy residues 333–383 (KMDT…NEQV), 409–486 (DAEN…GKDD), and 592–644 (GVIM…LKSS).

This sequence belongs to the CCDC22 family.

In Nematostella vectensis (Starlet sea anemone), this protein is Coiled-coil domain-containing protein 22 homolog.